We begin with the raw amino-acid sequence, 525 residues long: 2-isopropylmalate synthase (525 aa).

Residues 5–267 (VIIFDTTLRD…HTGIHHQEIY (263 aa)) enclose the Pyruvate carboxyltransferase domain. 4 residues coordinate Mn(2+): aspartate 14, histidine 202, histidine 204, and asparagine 238. The tract at residues 392–525 (RLEYFSVQSS…NNSQDMQETV (134 aa)) is regulatory domain.

The protein belongs to the alpha-IPM synthase/homocitrate synthase family. LeuA type 1 subfamily. In terms of assembly, homodimer. It depends on Mn(2+) as a cofactor.

The protein resides in the cytoplasm. It catalyses the reaction 3-methyl-2-oxobutanoate + acetyl-CoA + H2O = (2S)-2-isopropylmalate + CoA + H(+). Its pathway is amino-acid biosynthesis; L-leucine biosynthesis; L-leucine from 3-methyl-2-oxobutanoate: step 1/4. Functionally, catalyzes the condensation of the acetyl group of acetyl-CoA with 3-methyl-2-oxobutanoate (2-ketoisovalerate) to form 3-carboxy-3-hydroxy-4-methylpentanoate (2-isopropylmalate). The sequence is that of 2-isopropylmalate synthase from Sodalis glossinidius (strain morsitans).